A 498-amino-acid chain; its full sequence is Phenylalanine--tRNA ligase alpha subunit (498 aa).

Residues Thr-328, 372–374 (QVE), and Tyr-412 contribute to the L-phenylalanine site. Glu-414 serves as a coordination point for Mg(2+). L-phenylalanine is bound at residue Phe-438.

Belongs to the class-II aminoacyl-tRNA synthetase family. Phe-tRNA synthetase alpha subunit type 2 subfamily. Tetramer of two alpha and two beta subunits. It depends on Mg(2+) as a cofactor.

The protein localises to the cytoplasm. The catalysed reaction is tRNA(Phe) + L-phenylalanine + ATP = L-phenylalanyl-tRNA(Phe) + AMP + diphosphate + H(+). In Drosophila melanogaster (Fruit fly), this protein is Phenylalanine--tRNA ligase alpha subunit.